The following is a 596-amino-acid chain: uncharacterized protein (596 aa).

Residues 1-31 (MSTSNDPVVSSHDPIKQEKEQETDLEAQVEH) are disordered. The Cytoplasmic portion of the chain corresponds to 1-37 (MSTSNDPVVSSHDPIKQEKEQETDLEAQVEHKKRNER). Basic and acidic residues predominate over residues 13–22 (DPIKQEKEQE). Residues 38-58 (GNAFVGFLILIFVYYLLRGGS) form a helical membrane-spanning segment. At 59–596 (NDNDKQEMSH…ILVSDSGEEA (538 aa)) the chain is on the lumenal side. N-linked (GlcNAc...) asparagine glycosylation is present at asparagine 118. Histidine 197 is a Zn(2+) binding site. Aspartate 199 is an active-site residue. Zn(2+) is bound at residue aspartate 232. Residue glutamate 266 is the Proton acceptor of the active site. Zn(2+) contacts are provided by glutamate 267 and aspartate 295. Residues asparagine 466, asparagine 541, and asparagine 555 are each glycosylated (N-linked (GlcNAc...) asparagine). Histidine 565 provides a ligand contact to Zn(2+).

Belongs to the peptidase M20A family. Requires Zn(2+) as cofactor.

The protein localises to the vacuole membrane. This is an uncharacterized protein from Schizosaccharomyces pombe (strain 972 / ATCC 24843) (Fission yeast).